We begin with the raw amino-acid sequence, 416 residues long: Vacuole membrane protein KMS1 (416 aa).

An N-acetylglycine modification is found at G2. Residues 2-60 (GSAGVASSSSDVAISALREKHEKEVENLTLTTQPLNTLKLFVEATIQYIKRSISYLLAH) are Cytoplasmic-facing. The chain crosses the membrane as a helical span at residues 61–81 (GGWFILITTLLVVSGGLLVTV). At 82–101 (DGPHGKHVEEVLEYVRYGLW) the chain is on the lumenal side. Residues 102–124 (WIALGVASSIGLGSGLHTFVLYL) traverse the membrane as a helical segment. The Cytoplasmic segment spans residues 125–257 (GPHIALFTLK…WLLTHSQHLN (133 aa)). The chain crosses the membrane as a helical span at residues 258–278 (FFTVLVLASVPNPLFDLAGIM). Residues 279-289 (CGQFGIPFWEF) are Lumenal-facing. A helical membrane pass occupies residues 290 to 312 (FLATLIGKAIIKTHIQTIFIICV). Over 313-323 (CNNQLLDWMEN) the chain is Cytoplasmic. Residues 324–344 (ELIWILSHVPGLASMLPGLTA) traverse the membrane as a helical segment. At 345–372 (KLHAMKEKYIDAPSPVPSHIKVKKWDFS) the chain is on the lumenal side. Residues 373–393 (FASIWNGIVWLMLLNFFVKIV) traverse the membrane as a helical segment. Over 394 to 416 (TATAQRHLKKKQEKEMATLTHSD) the chain is Cytoplasmic.

It belongs to the VMP1 family.

It is found in the endoplasmic reticulum membrane. Involved in the early secretory pathway. Required for the correct export of secretory products from the endoplasmic reticulum (ER) and involved in the maintenance of ER integrity. This chain is Vacuole membrane protein KMS1, found in Arabidopsis thaliana (Mouse-ear cress).